The primary structure comprises 117 residues: Conotoxin vil14.3 (117 aa).

The signal sequence occupies residues 1-22; that stretch reads MGFRVLVLVVMATTSALPFTFS. A propeptide spanning residues 23–90 is cleaved from the precursor; it reads EEPGRSPFRP…FAELSVGQRR (68 aa). A disordered region spans residues 53 to 79; the sequence is RADGQPPDMRQPEMRRPEMRRPEVRQP. The span at 62-79 shows a compositional bias: basic and acidic residues; sequence RQPEMRRPEMRRPEVRQP. 2 disulfides stabilise this stretch: C96/C116 and C100/C112.

It belongs to the conotoxin R superfamily. In terms of tissue distribution, expressed by the venom duct.

Its subcellular location is the secreted. The protein is Conotoxin vil14.3 of Conus villepinii (Villepin's cone).